The primary structure comprises 347 residues: GMP reductase (347 aa).

108 to 131 contributes to the NADP(+) binding site; the sequence is ADFEKTKQILDLNPALNFVCIDVA. K(+)-binding residues include glycine 181 and glycine 183. Residue cysteine 186 is the Thioimidate intermediate of the active site. An NADP(+)-binding site is contributed by 216–239; it reads IISDGGCTTPGDVAKAFGGGADFV.

This sequence belongs to the IMPDH/GMPR family. GuaC type 1 subfamily. Homotetramer.

It carries out the reaction IMP + NH4(+) + NADP(+) = GMP + NADPH + 2 H(+). Its function is as follows. Catalyzes the irreversible NADPH-dependent deamination of GMP to IMP. It functions in the conversion of nucleobase, nucleoside and nucleotide derivatives of G to A nucleotides, and in maintaining the intracellular balance of A and G nucleotides. The sequence is that of GMP reductase from Escherichia coli O157:H7.